The sequence spans 233 residues: Octanoyltransferase (233 aa).

The BPL/LPL catalytic domain maps to 34-212 (PDRPDVLLLL…AFAQTFELDL (179 aa)). Residues 76–83 (RGGEVTHH), 143–145 (AIG), and 156–158 (GFA) each bind substrate. Residue Cys174 is the Acyl-thioester intermediate of the active site.

It belongs to the LipB family.

The protein localises to the cytoplasm. The enzyme catalyses octanoyl-[ACP] + L-lysyl-[protein] = N(6)-octanoyl-L-lysyl-[protein] + holo-[ACP] + H(+). The protein operates within protein modification; protein lipoylation via endogenous pathway; protein N(6)-(lipoyl)lysine from octanoyl-[acyl-carrier-protein]: step 1/2. Catalyzes the transfer of endogenously produced octanoic acid from octanoyl-acyl-carrier-protein onto the lipoyl domains of lipoate-dependent enzymes. Lipoyl-ACP can also act as a substrate although octanoyl-ACP is likely to be the physiological substrate. This is Octanoyltransferase from Synechococcus elongatus (strain ATCC 33912 / PCC 7942 / FACHB-805) (Anacystis nidulans R2).